A 1111-amino-acid chain; its full sequence is Phytochrome C (1111 aa).

The region spanning 213-393 is the GAF domain; it reads NMLLLCDALV…VFGVQINKEA (181 aa). Cysteine 318 serves as a coordination point for phytochromobilin. 2 consecutive PAS domains span residues 604 to 674 and 737 to 808; these read IVNE…LEGS and DYAR…TKLR. The Histidine kinase domain occupies 889–1111; the sequence is YLRHEVKDPE…FVILTEFPLI (223 aa).

This sequence belongs to the phytochrome family. As to quaternary structure, homodimer. Post-translationally, contains one covalently linked phytochromobilin chromophore.

Functionally, regulatory photoreceptor which exists in two forms that are reversibly interconvertible by light: the Pr form that absorbs maximally in the red region of the spectrum and the Pfr form that absorbs maximally in the far-red region. Photoconversion of Pr to Pfr induces an array of morphogenic responses, whereas reconversion of Pfr to Pr cancels the induction of those responses. Pfr controls the expression of a number of nuclear genes including those encoding the small subunit of ribulose-bisphosphate carboxylase, chlorophyll A/B binding protein, protochlorophyllide reductase, rRNA, etc. It also controls the expression of its own gene(s) in a negative feedback fashion. In Arabidopsis thaliana (Mouse-ear cress), this protein is Phytochrome C (PHYC).